The sequence spans 287 residues: Rhomboid-like protein 18 (287 aa).

6 consecutive transmembrane segments (helical) span residues 10 to 30 (NAPV…FFGI), 53 to 73 (LIIS…LYLL), 90 to 110 (VFIF…LSLT), 117 to 137 (LLTS…FLDI), 145 to 165 (VLGV…QLLL), and 172 to 192 (IFTG…IFGI). In terms of domain architecture, UBA spans 244–284 (EPSEEAIATLVSMGFDQNAARQALVHARNDVNAATNILLEA).

It belongs to the peptidase S54 family.

The protein localises to the membrane. Its function is as follows. Probable rhomboid-type serine protease that catalyzes intramembrane proteolysis. In Arabidopsis thaliana (Mouse-ear cress), this protein is Rhomboid-like protein 18.